The primary structure comprises 706 residues: Fatty acid oxidation complex subunit alpha (706 aa).

Positions 1 to 188 (MEKTFSLSRR…KMGLVDDVVP (188 aa)) are enoyl-CoA hydratase. The segment at 308-706 (RKVAKAVVLG…AMAAEGKTFY (399 aa)) is 3-hydroxyacyl-CoA dehydrogenase.

This sequence in the N-terminal section; belongs to the enoyl-CoA hydratase/isomerase family. In the central section; belongs to the 3-hydroxyacyl-CoA dehydrogenase family. As to quaternary structure, heterotetramer of two alpha chains (FadJ) and two beta chains (FadI).

The protein resides in the cytoplasm. It carries out the reaction a (3S)-3-hydroxyacyl-CoA = a (2E)-enoyl-CoA + H2O. The enzyme catalyses a 4-saturated-(3S)-3-hydroxyacyl-CoA = a (3E)-enoyl-CoA + H2O. The catalysed reaction is a (3S)-3-hydroxyacyl-CoA + NAD(+) = a 3-oxoacyl-CoA + NADH + H(+). It catalyses the reaction (3S)-3-hydroxybutanoyl-CoA = (3R)-3-hydroxybutanoyl-CoA. The protein operates within lipid metabolism; fatty acid beta-oxidation. Functionally, catalyzes the formation of a hydroxyacyl-CoA by addition of water on enoyl-CoA. Also exhibits 3-hydroxyacyl-CoA epimerase and 3-hydroxyacyl-CoA dehydrogenase activities. This is Fatty acid oxidation complex subunit alpha from Shewanella amazonensis (strain ATCC BAA-1098 / SB2B).